Consider the following 389-residue polypeptide: MPYEKKAVHFGGGNIGRGFVAEFLHNSGYEVVFVDVMDSIIESLQKTSTYKVTEIGDDGEREFTIDHYRAINSKNEMDKVIEEIATADVVTCAVGPNILKFVAEPVAKAIEARKLDYPIAVIACENAINATTTWRGFIESKLSEETKKNIDSKARFANSAIDRIVPQQPPNAGLNVVIEKFHEWCVEQKPFENGGKKPDVKGIHYVDDLEPYIERKLFTVNTSHATAAYYGHQNKIAYIHEVLQDKKLHDIVRDAVKETANLIVKKHGVSTQEQSDYVEQIIKRISNPVLKDNVERVGRAPLRKLSRKERFIGPAAQLAERGESYQTLLGAVEQAYRFQNVEGDEESVELAKILKEHSPEEVVTKVNGIEKGHALFDPLVAIVKKVQGS.

Residue 7–18 (AVHFGGGNIGRG) coordinates NAD(+). Lys-216 is a catalytic residue.

This sequence belongs to the mannitol dehydrogenase family. As to quaternary structure, monomer.

The catalysed reaction is D-mannitol 1-phosphate + NAD(+) = beta-D-fructose 6-phosphate + NADH + H(+). Catalyzes the NAD(H)-dependent interconversion of D-fructose 6-phosphate and D-mannitol 1-phosphate in the mannitol metabolic pathway. This chain is Mannitol-1-phosphate 5-dehydrogenase, found in Pyrenophora tritici-repentis (strain Pt-1C-BFP) (Wheat tan spot fungus).